The chain runs to 460 residues: 3-isopropylmalate dehydratase large subunit (460 aa).

The [4Fe-4S] cluster site is built by Cys338, Cys398, and Cys401.

This sequence belongs to the aconitase/IPM isomerase family. LeuC type 1 subfamily. Heterodimer of LeuC and LeuD. [4Fe-4S] cluster serves as cofactor.

The catalysed reaction is (2R,3S)-3-isopropylmalate = (2S)-2-isopropylmalate. It functions in the pathway amino-acid biosynthesis; L-leucine biosynthesis; L-leucine from 3-methyl-2-oxobutanoate: step 2/4. Functionally, catalyzes the isomerization between 2-isopropylmalate and 3-isopropylmalate, via the formation of 2-isopropylmaleate. This Streptococcus thermophilus (strain ATCC BAA-491 / LMD-9) protein is 3-isopropylmalate dehydratase large subunit.